Here is a 122-residue protein sequence, read N- to C-terminus: Large ribosomal subunit protein uL14c (122 aa).

The protein belongs to the universal ribosomal protein uL14 family. In terms of assembly, part of the 50S ribosomal subunit.

The protein localises to the plastid. It is found in the chloroplast. Its function is as follows. Binds to 23S rRNA. The chain is Large ribosomal subunit protein uL14c from Buxus microphylla (Littleleaf boxwood).